The following is a 93-amino-acid chain: MMDMARAHVFISGRVQGVNFRASARNYAREVGVSGWVRNLEDGRVEAVFEGERSAVQKMVSWCYSGPSHARVEAVDVRWEKPTGEERGFSIIW.

Positions 6–93 constitute an Acylphosphatase-like domain; that stretch reads RAHVFISGRV…GEERGFSIIW (88 aa). Catalysis depends on residues Arg21 and Asn39.

Belongs to the acylphosphatase family.

It carries out the reaction an acyl phosphate + H2O = a carboxylate + phosphate + H(+). The sequence is that of Acylphosphatase (acyP) from Roseiflexus sp. (strain RS-1).